Consider the following 65-residue polypeptide: Disintegrin CC5 (65 aa).

The Disintegrin domain maps to M1–S65. 4 disulfide bridges follow: C7–C30, C21–C27, C26–C51, and C39–C58. The Cell attachment site motif lies at R43–D45.

Belongs to the disintegrin family. Dimeric disintegrin subfamily. In terms of assembly, homodimer; disulfide-linked. In terms of tissue distribution, expressed by the venom gland.

It is found in the secreted. In terms of biological role, binds and inhibits integrins alpha-IIb/beta-3 (ITGA2B/ITGB3), alpha-V/beta-3 (ITGAV/ITGB3) and alpha-5/beta-1 (ITGA5/ITGB1). The protein is Disintegrin CC5 of Cerastes cerastes (Horned desert viper).